The primary structure comprises 246 residues: Pyridoxine 5'-phosphate synthase (246 aa).

Position 9 (Asn9) interacts with 3-amino-2-oxopropyl phosphate. 1-deoxy-D-xylulose 5-phosphate is bound at residue 11 to 12; it reads DH. Arg20 is a 3-amino-2-oxopropyl phosphate binding site. His45 (proton acceptor) is an active-site residue. Arg47 and His52 together coordinate 1-deoxy-D-xylulose 5-phosphate. The active-site Proton acceptor is Glu72. Thr102 provides a ligand contact to 1-deoxy-D-xylulose 5-phosphate. His193 (proton donor) is an active-site residue. 3-amino-2-oxopropyl phosphate contacts are provided by residues Gly194 and 215 to 216; that span reads GH.

It belongs to the PNP synthase family. In terms of assembly, homooctamer; tetramer of dimers.

It localises to the cytoplasm. The enzyme catalyses 3-amino-2-oxopropyl phosphate + 1-deoxy-D-xylulose 5-phosphate = pyridoxine 5'-phosphate + phosphate + 2 H2O + H(+). Its pathway is cofactor biosynthesis; pyridoxine 5'-phosphate biosynthesis; pyridoxine 5'-phosphate from D-erythrose 4-phosphate: step 5/5. Its function is as follows. Catalyzes the complicated ring closure reaction between the two acyclic compounds 1-deoxy-D-xylulose-5-phosphate (DXP) and 3-amino-2-oxopropyl phosphate (1-amino-acetone-3-phosphate or AAP) to form pyridoxine 5'-phosphate (PNP) and inorganic phosphate. The chain is Pyridoxine 5'-phosphate synthase from Colwellia psychrerythraea (strain 34H / ATCC BAA-681) (Vibrio psychroerythus).